Consider the following 229-residue polypeptide: PKHD-type hydroxylase Rpal_3968 (229 aa).

The Fe2OG dioxygenase domain occupies 78-180 (QIFPPLFNRY…RVASFFWLQS (103 aa)). Fe cation contacts are provided by His-98, Asp-100, and His-161. Arg-171 provides a ligand contact to 2-oxoglutarate.

Requires Fe(2+) as cofactor. L-ascorbate is required as a cofactor.

This chain is PKHD-type hydroxylase Rpal_3968, found in Rhodopseudomonas palustris (strain TIE-1).